The primary structure comprises 297 residues: Transmembrane protein 178A (297 aa).

The N-terminal stretch at 1-25 (MEPRALVTALSLGLSLCSLGLLVTA) is a signal peptide. Over 26-179 (IFTDHWYETD…LLHLRRITAG (154 aa)) the chain is Extracellular. A compositionally biased stretch (basic and acidic residues) spans 41–57 (ESCERSRAGADPPDQKN). The interval 41–86 (ESCERSRAGADPPDQKNRLMPLSHLPLRDSPPLGRRLLPGGPGRSD) is disordered. The segment covering 68–79 (RDSPPLGRRLLP) has biased composition (low complexity). Asn-158 is a glycosylation site (N-linked (GlcNAc...) asparagine). A helical membrane pass occupies residues 180 to 200 (FLGMAVAVLLCGCIVATVSFF). Over 201–208 (WEESLTQH) the chain is Cytoplasmic. The chain crosses the membrane as a helical span at residues 209 to 229 (VAGLLFLMTGIFCTISLCTYA). Topologically, residues 230–257 (ASVSYDLNRVPKLIYSLPHDVEHGYSWS) are extracellular. The chain crosses the membrane as a helical span at residues 258–278 (IFCAWCSLGFIVAAGGLCIAY). Topologically, residues 279 to 297 (PFISRTKIAHLKSGRDSTV) are cytoplasmic.

The protein belongs to the TMEM178 family. Interacts with STIM1.

Its subcellular location is the endoplasmic reticulum membrane. Acts as a negative regulator of osteoclast differentiation in basal and inflammatory conditions by regulating TNFSF11-induced Ca (2+) fluxes, thereby controlling the induction of NFATC1. This is Transmembrane protein 178A (Tmem178a) from Rattus norvegicus (Rat).